Reading from the N-terminus, the 236-residue chain is uncharacterized protein (236 aa).

The interval 217-236 is disordered; sequence GESPDNVVRGEGGFGSTGGH. Gly residues predominate over residues 226-236; sequence GEGGFGSTGGH.

This is an uncharacterized protein from Ostreid herpesvirus 1 (isolate France) (OsHV-1).